Consider the following 272-residue polypeptide: MAAAAMRPSMGALGRISSSTPSPLRPLTQTASLSTTAALLKRHKYREARVYRDNSKHRGESAIHRSGTRWRLSMSDEPLPRPVPRNKLPAIETDPDHGLWEFFQNRTMVVNSPPEIAKHGRSWTAEELRHKSWDDLHRLWWVCAKERNRIATANWERNKSGLGFGEAEMRERDNAVRQTMRSIKHVLTERFYTWEDAVKVAEKDPEVDLTGNGPAFTPSNFLEDSDAAATEGEQQAAEATEEAVEKAEPATAATPESATIPSSQQQTDTPRL.

Disordered stretches follow at residues 1-29, 56-87, and 227-272; these read MAAA…PLTQ, KHRG…PRNK, and AAAT…TPRL. A compositionally biased stretch (low complexity) spans 17–29; sequence SSSTPSPLRPLTQ. Low complexity-rich tracts occupy residues 227-238 and 249-259; these read AAATEGEQQAAE and PATAATPESAT. Over residues 260–272 the composition is skewed to polar residues; the sequence is IPSSQQQTDTPRL.

The protein belongs to the universal ribosomal protein uL29 family. Component of the mitochondrial large ribosomal subunit. Mature mitochondrial ribosomes consist of a small (37S) and a large (54S) subunit. The 37S subunit contains at least 33 different proteins and 1 molecule of RNA (15S). The 54S subunit contains at least 45 different proteins and 1 molecule of RNA (21S).

The protein localises to the mitochondrion. In Chaetomium globosum (strain ATCC 6205 / CBS 148.51 / DSM 1962 / NBRC 6347 / NRRL 1970) (Soil fungus), this protein is Large ribosomal subunit protein uL29m (MRPL4).